The primary structure comprises 241 residues: 1-(5-phosphoribosyl)-5-[(5-phosphoribosylamino)methylideneamino] imidazole-4-carboxamide isomerase (241 aa).

The active-site Proton acceptor is the aspartate 8. Aspartate 130 (proton donor) is an active-site residue.

Belongs to the HisA/HisF family.

It localises to the cytoplasm. The enzyme catalyses 1-(5-phospho-beta-D-ribosyl)-5-[(5-phospho-beta-D-ribosylamino)methylideneamino]imidazole-4-carboxamide = 5-[(5-phospho-1-deoxy-D-ribulos-1-ylimino)methylamino]-1-(5-phospho-beta-D-ribosyl)imidazole-4-carboxamide. Its pathway is amino-acid biosynthesis; L-histidine biosynthesis; L-histidine from 5-phospho-alpha-D-ribose 1-diphosphate: step 4/9. The sequence is that of 1-(5-phosphoribosyl)-5-[(5-phosphoribosylamino)methylideneamino] imidazole-4-carboxamide isomerase from Francisella philomiragia subsp. philomiragia (strain ATCC 25017 / CCUG 19701 / FSC 153 / O#319-036).